A 343-amino-acid chain; its full sequence is Dimethyladenosine transferase 1, mitochondrial (343 aa).

Residues 28-31 (QNFL), N29, L31, G56, E78, D133, and N169 each bind S-adenosyl-L-methionine.

It belongs to the class I-like SAM-binding methyltransferase superfamily. rRNA adenine N(6)-methyltransferase family. KsgA subfamily.

It localises to the mitochondrion. Probable S-adenosyl-L-methionine-dependent methyltransferase which specifically dimethylates mitochondrial 12S rRNA at the conserved stem loop. Also required for basal transcription of mitochondrial DNA. Stimulates transcription independently of the methyltransferase activity. The chain is Dimethyladenosine transferase 1, mitochondrial from Vermamoeba vermiformis (Amoeba).